A 1939-amino-acid chain; its full sequence is Myosin-1 (1939 aa).

One can recognise a Myosin N-terminal SH3-like domain in the interval 33–82; it reads DAKTSVFVAEPKESFVKGTVQSREGGKVTVKTEAGATLTVKEDQVFPMNP. Threonine 64 and threonine 69 each carry phosphothreonine. Residues 86-782 enclose the Myosin motor domain; that stretch reads DKIEDMAMMT…LLGLLEEMRD (697 aa). Lysine 130 is modified (N6,N6,N6-trimethyllysine). 179-186 is a binding site for ATP; that stretch reads GESGAGKT. Position 389 is a phosphotyrosine (tyrosine 389). The residue at position 392 (serine 392) is a Phosphoserine. A Phosphothreonine modification is found at threonine 419. A Phosphotyrosine modification is found at tyrosine 424. Position 625 is a phosphoserine (serine 625). Residues 659–681 form an actin-binding region; the sequence is LNKLMTNLRSTHPHFVRCIIPNE. Histidine 757 carries the post-translational modification Pros-methylhistidine. The actin-binding stretch occupies residues 761-775; it reads KFGHTKVFFKAGLLG. The IQ domain occupies 785 to 814; sequence LAQLITRTQARCRGFLARVEYQKMVERRES. Residues 843-1939 adopt a coiled-coil conformation; it reads LLKSAETEKE…EVHTKIISEE (1097 aa). 2 positions are modified to phosphoserine: serine 1092 and serine 1096. Disordered stretches follow at residues 1125–1147 and 1153–1172; these read EIEA…SREL and RLEE…KKRE. Basic and acidic residues predominate over residues 1128 to 1147; that stretch reads AERASRAKAEKQRSDLSREL. Phosphoserine occurs at positions 1162 and 1237. Threonine 1241 bears the Phosphothreonine mark. Serine 1243 carries the phosphoserine modification. Threonine 1255 bears the Phosphothreonine mark. Serine 1261 carries the post-translational modification Phosphoserine. Phosphothreonine is present on residues threonine 1265 and threonine 1286. Serine 1288, serine 1292, serine 1303, and serine 1306 each carry phosphoserine. Tyrosine 1464 is subject to Phosphotyrosine. Threonine 1467 is subject to Phosphothreonine. Serine 1474 is modified (phosphoserine). Tyrosine 1492 is subject to Phosphotyrosine. Position 1495 is a phosphoserine (serine 1495). Threonine 1501 is subject to Phosphothreonine. Serine 1514 bears the Phosphoserine mark. Position 1517 is a phosphothreonine (threonine 1517). Residues serine 1554, serine 1574, serine 1600, serine 1603, serine 1714, and serine 1726 each carry the phosphoserine modification. Threonine 1730 and threonine 1736 each carry phosphothreonine. Phosphoserine is present on serine 1739.

Belongs to the TRAFAC class myosin-kinesin ATPase superfamily. Myosin family. Muscle myosin is a hexameric protein that consists of 2 heavy chain subunits (MHC), 2 alkali light chain subunits (MLC) and 2 regulatory light chain subunits (MLC-2). Interacts with SLC26A5.

It localises to the cytoplasm. The protein resides in the myofibril. Functionally, required for normal hearing. It plays a role in cochlear amplification of auditory stimuli, likely through the positive regulation of prestin (SLC26A5) activity and outer hair cell (OHC) electromotility. In Canis lupus familiaris (Dog), this protein is Myosin-1 (MYH1).